We begin with the raw amino-acid sequence, 494 residues long: Putative glucuronosyltransferase PGSIP7 (494 aa).

A helical transmembrane segment spans residues 4 to 24; the sequence is QRTLMFSCWVLSLLIIKTTAY. Mn(2+)-binding residues include aspartate 161 and aspartate 163. 5 helical membrane-spanning segments follow: residues 316–336, 362–382, 389–409, 410–430, and 444–464; these read YSAE…IILV, AFKF…FFII, LIGW…PINA, FLLP…TLLV, and LSVF…FVKI.

Belongs to the glycosyltransferase 8 family. Glycogenin subfamily. Mn(2+) serves as cofactor.

It is found in the membrane. This Arabidopsis thaliana (Mouse-ear cress) protein is Putative glucuronosyltransferase PGSIP7 (PGSIP7).